The chain runs to 399 residues: Methylthioribose kinase (399 aa).

ATP is bound by residues Asn40, Lys57, and 111–113 (EDL). Asp229 contacts substrate. Residue 246-248 (DAE) coordinates ATP. Substrate is bound at residue Arg344.

This sequence belongs to the methylthioribose kinase family. Homodimer.

The enzyme catalyses 5-(methylsulfanyl)-D-ribose + ATP = 5-(methylsulfanyl)-alpha-D-ribose 1-phosphate + ADP + H(+). It participates in amino-acid biosynthesis; L-methionine biosynthesis via salvage pathway; S-methyl-5-thio-alpha-D-ribose 1-phosphate from S-methyl-5'-thioadenosine (hydrolase route): step 2/2. In terms of biological role, catalyzes the phosphorylation of methylthioribose into methylthioribose-1-phosphate. The sequence is that of Methylthioribose kinase from Klebsiella pneumoniae subsp. pneumoniae (strain ATCC 700721 / MGH 78578).